A 192-amino-acid chain; its full sequence is Ubiquitin-conjugating enzyme E2 27 (192 aa).

The UBC core domain maps to 2-150 (IDFSRIQKEL…ARYWTETFAK (149 aa)). Residue cysteine 88 is the Glycyl thioester intermediate of the active site. One can recognise a UBA domain in the interval 153–192 (SLEEKVKRLVEMGFGDAQVRSAIESSGGDENLALEKLCSA).

The protein belongs to the ubiquitin-conjugating enzyme family. As to expression, expressed in seeds, pistils, siliques, hypocotyls and leaves.

The catalysed reaction is S-ubiquitinyl-[E1 ubiquitin-activating enzyme]-L-cysteine + [E2 ubiquitin-conjugating enzyme]-L-cysteine = [E1 ubiquitin-activating enzyme]-L-cysteine + S-ubiquitinyl-[E2 ubiquitin-conjugating enzyme]-L-cysteine.. Its pathway is protein modification; protein ubiquitination. In terms of biological role, accepts the ubiquitin from the E1 complex and catalyzes its covalent attachment to other proteins. The polypeptide is Ubiquitin-conjugating enzyme E2 27 (UBC27) (Arabidopsis thaliana (Mouse-ear cress)).